Consider the following 196-residue polypeptide: Chorion protein S19 (196 aa).

Positions 1–16 (MNTFATLAIFISACLA) are cleaved as a signal peptide.

It belongs to the chorion protein S19 family.

Its subcellular location is the secreted. In terms of biological role, chorion membrane (egg shell) protein; plays a role in protecting the egg from the environment. This is Chorion protein S19 (Cp19) from Drosophila grimshawi (Hawaiian fruit fly).